Here is a 197-residue protein sequence, read N- to C-terminus: Ribonuclease HII (197 aa).

The region spanning 9–197 (KLIAGVDEVG…APVKKALEQF (189 aa)) is the RNase H type-2 domain. D15, E16, and D107 together coordinate a divalent metal cation.

It belongs to the RNase HII family. It depends on Mn(2+) as a cofactor. Requires Mg(2+) as cofactor.

It is found in the cytoplasm. The catalysed reaction is Endonucleolytic cleavage to 5'-phosphomonoester.. Endonuclease that specifically degrades the RNA of RNA-DNA hybrids. The chain is Ribonuclease HII (rnhB) from Haemophilus influenzae (strain ATCC 51907 / DSM 11121 / KW20 / Rd).